We begin with the raw amino-acid sequence, 302 residues long: Lipoyl synthase (302 aa).

[4Fe-4S] cluster-binding residues include Cys44, Cys49, Cys55, Cys70, Cys74, Cys77, and Ser283. The region spanning 56-272 (WSKKHATVMI…ARVAKSKGFL (217 aa)) is the Radical SAM core domain.

This sequence belongs to the radical SAM superfamily. Lipoyl synthase family. [4Fe-4S] cluster is required as a cofactor.

The protein localises to the cytoplasm. The catalysed reaction is [[Fe-S] cluster scaffold protein carrying a second [4Fe-4S](2+) cluster] + N(6)-octanoyl-L-lysyl-[protein] + 2 oxidized [2Fe-2S]-[ferredoxin] + 2 S-adenosyl-L-methionine + 4 H(+) = [[Fe-S] cluster scaffold protein] + N(6)-[(R)-dihydrolipoyl]-L-lysyl-[protein] + 4 Fe(3+) + 2 hydrogen sulfide + 2 5'-deoxyadenosine + 2 L-methionine + 2 reduced [2Fe-2S]-[ferredoxin]. It participates in protein modification; protein lipoylation via endogenous pathway; protein N(6)-(lipoyl)lysine from octanoyl-[acyl-carrier-protein]: step 2/2. Functionally, catalyzes the radical-mediated insertion of two sulfur atoms into the C-6 and C-8 positions of the octanoyl moiety bound to the lipoyl domains of lipoate-dependent enzymes, thereby converting the octanoylated domains into lipoylated derivatives. This Orientia tsutsugamushi (strain Ikeda) (Rickettsia tsutsugamushi) protein is Lipoyl synthase.